Reading from the N-terminus, the 492-residue chain is Probable small intestine urate exporter (492 aa).

Positions 1-20 (MSTGADLKAREGDIPSDNMT) are disordered. 6 N-linked (GlcNAc...) asparagine glycosylation sites follow: Asn18, Asn44, Asn53, Asn63, Asn72, and Asn87. The next 11 membrane-spanning stretches (helical) occupy residues 112 to 132 (LSYG…VFGA), 134 to 154 (YVVG…PLAA), 156 to 176 (AGVA…VMVL), 198 to 218 (IAAS…GLIC), 225 to 245 (YIFY…FPLV), 287 to 307 (LPLW…STVM), 327 to 347 (ILSA…GLLA), 363 to 383 (KLFT…LPWV), 393 to 413 (FLVL…INFL), 426 to 446 (LLQV…GFFI), and 456 to 476 (NVFF…LIFS).

The protein belongs to the major facilitator superfamily. Sodium/anion cotransporter family. Expressed in the small intestine (at protein level).

The protein resides in the apical cell membrane. The enzyme catalyses 3 Na(+)(out) + phosphate(out) = 3 Na(+)(in) + phosphate(in). It carries out the reaction urate(out) + n chloride(in) = urate(in) + n chloride(out). The catalysed reaction is L-thyroxine(out) = L-thyroxine(in). It catalyses the reaction 3,3',5-triiodo-L-thyronine(out) = 3,3',5-triiodo-L-thyronine(in). Its function is as follows. Acts as a membrane potential-dependent organic anion transporter, the transport requires a low concentration of chloride ions. Mediates chloride-dependent transport of urate. Mediates sodium-independent high affinity transport of thyroid hormones including L-thyroxine (T4) and 3,3',5-triiodo-L-thyronine (T3). Can actively transport inorganic phosphate into cells via Na(+) cotransport. This is Probable small intestine urate exporter (Slc17a4) from Mus musculus (Mouse).